Consider the following 100-residue polypeptide: uncharacterized protein (100 aa).

Residues 78-100 (NNGNLDFKGRADERRQPVSNLRM) are disordered. Basic and acidic residues predominate over residues 84-93 (FKGRADERRQ).

This is an uncharacterized protein from Saccharomyces cerevisiae (strain ATCC 204508 / S288c) (Baker's yeast).